Reading from the N-terminus, the 402-residue chain is Deoxyguanosinetriphosphate triphosphohydrolase-like protein (402 aa).

The disordered stretch occupies residues 20–39 (PAFSRGRLVPEPESPTRTPF). Residues 73–217 (RLTHTIEVAQ…AAIADDIAYN (145 aa)) enclose the HD domain.

The protein belongs to the dGTPase family. Type 2 subfamily.

This chain is Deoxyguanosinetriphosphate triphosphohydrolase-like protein, found in Brucella canis (strain ATCC 23365 / NCTC 10854 / RM-666).